The following is a 672-amino-acid chain: Fumonisin cluster-specific transcription factor FUM21 (672 aa).

Positions 30-56 form a DNA-binding region, zn(2)-C6 fungal-type; sequence CESCKRRKVRCNGTNPCNQCQKSSIEC. Disordered stretches follow at residues 65–111 and 190–212; these read ANDG…RFDG and KSSGPSYGMSEPPSRDSDPGFNT. Positions 77 to 93 are enriched in polar residues; sequence SPVQHTRGSLTPPQTSP.

It is found in the nucleus. Transcription factor that regulates the expression of the gene cluster that mediates the biosynthesis of fumonisins B1 (FB1), B2 (FB2), B3 (FB3), and B4 (FB4), which are carcinogenic mycotoxins. This Gibberella moniliformis (strain M3125 / FGSC 7600) (Maize ear and stalk rot fungus) protein is Fumonisin cluster-specific transcription factor FUM21 (FUM21).